The following is a 103-amino-acid chain: Large ribosomal subunit protein bL21 (103 aa).

It belongs to the bacterial ribosomal protein bL21 family. In terms of assembly, part of the 50S ribosomal subunit. Contacts protein L20.

Functionally, this protein binds to 23S rRNA in the presence of protein L20. The sequence is that of Large ribosomal subunit protein bL21 from Mycobacterium marinum (strain ATCC BAA-535 / M).